The sequence spans 547 residues: Myrosinase 2 (547 aa).

The signal sequence occupies residues 1 to 28 (MQHNTYIYILTMKLLGFALAILLVVATC). 3 cysteine pairs are disulfide-bonded: Cys-36/Cys-460, Cys-44/Cys-456, and Cys-236/Cys-244. A beta-D-glucoside-binding positions include Gln-69, His-171, and 216–217 (NQ). Asn-340 carries N-linked (GlcNAc...) asparagine glycosylation. Tyr-359 provides a ligand contact to a beta-D-glucoside. Asn-384 is a glycosylation site (N-linked (GlcNAc...) asparagine). A beta-D-glucoside is bound by residues Glu-430, Trp-479, 486 to 487 (EF), and Phe-495. Glu-430 serves as the catalytic Nucleophile. Asn-504 carries N-linked (GlcNAc...) asparagine glycosylation.

This sequence belongs to the glycosyl hydrolase 1 family. In terms of assembly, interacts with MVP1. In terms of tissue distribution, expressed in phloem-associated cells.

It catalyses the reaction a thioglucoside + H2O = a sugar + a thiol.. Functionally, may degrade glucosinolates (glucose residue linked by a thioglucoside bound to an amino acid derivative) to glucose, sulfate and any of the products: thiocyanates, isothiocyanates, nitriles, epithionitriles or oxazolidine-2-thiones. These toxic degradation products can deter insect herbivores. Seems to function in abscisic acid (ABA) and methyl jasmonate (MeJA) signaling in guard cells. Functionally redundant with TGG1. This Arabidopsis thaliana (Mouse-ear cress) protein is Myrosinase 2.